Reading from the N-terminus, the 563-residue chain is Forkhead box protein O (563 aa).

2 disordered regions span residues 1-72 and 177-243; these read MDDF…DPQQ and KSVR…SYQL. A Phosphothreonine; by PKB/AKT1 modification is found at Thr-43. Residues 58 to 72 are compositionally biased toward polar residues; that stretch reads TKASNQQLANGDPQQ. Positions 90–196 form a DNA-binding region, fork-head; the sequence is WGNLSYADLI…ETSRYEKRRG (107 aa). Residue Ser-185 is modified to Phosphoserine; by PKB/AKT1. The segment covering 216–225 has biased composition (polar residues); the sequence is ATPSPSSSVS. At Ser-253 the chain carries Phosphoserine; by PKB/AKT1. Ser-256, Ser-257, and Ser-262 each carry phosphoserine. Residues 317–371 are disordered; it reads AASGLPTQPPPPYQPPQHPQHTQGYALNGPGLSPNSVTTTMSPAYPNSEPSSDSL. The span at 323–334 shows a compositional bias: pro residues; it reads TQPPPPYQPPQH. A compositionally biased stretch (polar residues) spans 349–358; the sequence is SPNSVTTTMS.

Interacts with melt.

It is found in the cytoplasm. The protein resides in the nucleus. Its function is as follows. Transcription factor involved in the regulation of the insulin signaling pathway. Consistently activates both the downstream target Thor\d4EBP and the feedback control target InR. Involved in negative regulation of the cell cycle, modulating cell growth and proliferation. In response to cellular stresses, such as nutrient deprivation or increased levels of reactive oxygen species, foxo is activated and inhibits growth through the action of target genes such as Thor. Foxo activated in the adult fat body can regulate lifespan in adults; an insulin peptide itself may function as one secondary messenger of insulin-regulated aging. Also regulates Lip4, homolog of human acid lipases, thereby acting as a key modulator of lipid metabolism by insulin signaling and integrates insulin responses to glucose and lipid homeostasis. This Drosophila mojavensis (Fruit fly) protein is Forkhead box protein O.